Here is a 228-residue protein sequence, read N- to C-terminus: Ribosomal RNA small subunit methyltransferase G (228 aa).

Residues G70, L75, 120–121, and R138 contribute to the S-adenosyl-L-methionine site; that span reads AE. The segment at 207–228 is disordered; it reads RRGDTRGPNRRVSPRRTGGAPA.

It belongs to the methyltransferase superfamily. RNA methyltransferase RsmG family.

Its subcellular location is the cytoplasm. Its function is as follows. Specifically methylates the N7 position of guanine in position 518 of 16S rRNA. This is Ribosomal RNA small subunit methyltransferase G from Mycobacterium marinum (strain ATCC BAA-535 / M).